Here is a 234-residue protein sequence, read N- to C-terminus: Demethylmenaquinone methyltransferase (234 aa).

Residues Thr-62, Asp-80, 100 to 101 (DA), and Ser-117 contribute to the S-adenosyl-L-methionine site.

This sequence belongs to the class I-like SAM-binding methyltransferase superfamily. MenG/UbiE family.

It carries out the reaction a 2-demethylmenaquinol + S-adenosyl-L-methionine = a menaquinol + S-adenosyl-L-homocysteine + H(+). The protein operates within quinol/quinone metabolism; menaquinone biosynthesis; menaquinol from 1,4-dihydroxy-2-naphthoate: step 2/2. Functionally, methyltransferase required for the conversion of demethylmenaquinol (DMKH2) to menaquinol (MKH2). The chain is Demethylmenaquinone methyltransferase from Mycobacterium bovis (strain ATCC BAA-935 / AF2122/97).